We begin with the raw amino-acid sequence, 445 residues long: Phosphoglucosamine mutase (445 aa).

The active-site Phosphoserine intermediate is the S104. Mg(2+) contacts are provided by S104, D243, D245, and D247. S104 is subject to Phosphoserine.

The protein belongs to the phosphohexose mutase family. It depends on Mg(2+) as a cofactor. Activated by phosphorylation.

The enzyme catalyses alpha-D-glucosamine 1-phosphate = D-glucosamine 6-phosphate. Functionally, catalyzes the conversion of glucosamine-6-phosphate to glucosamine-1-phosphate. This chain is Phosphoglucosamine mutase, found in Chromobacterium violaceum (strain ATCC 12472 / DSM 30191 / JCM 1249 / CCUG 213 / NBRC 12614 / NCIMB 9131 / NCTC 9757 / MK).